A 309-amino-acid polypeptide reads, in one-letter code: Taste receptor type 2 member 8 (309 aa).

Residues 1–7 (MFSPADN) are Extracellular-facing. Residues 8–28 (IFIILITGEFILGILGNGYIA) form a helical membrane-spanning segment. The Cytoplasmic portion of the chain corresponds to 29-50 (LVNWIDWIKKKKISTVDYILTN). The chain crosses the membrane as a helical span at residues 51–71 (LVIARICLISVMVVNGIVIVL). Residues 72–82 (NPDVYTKNKQQ) are Extracellular-facing. A helical membrane pass occupies residues 83-103 (IVIFTFWTFANYLNMWITTCL). Over 104-131 (NVFYFLKIASSSHPLFLWLKWKIDMVVH) the chain is Cytoplasmic. A helical membrane pass occupies residues 132 to 152 (WILLGCFAISLLVSLIAAIVL). Residues 153–184 (SCDYRFHAIAKHKRNITEMFHVSKIPYFEPLT) lie on the Extracellular side of the membrane. N-linked (GlcNAc...) asparagine glycosylation is present at Asn-167. Residues 185 to 205 (LFNLFAIVPFIVSLISFFLLV) form a helical membrane-spanning segment. Over 206 to 239 (RSLWRHTKQIKLYATGSRDPSTEVHVRAIKTMTS) the chain is Cytoplasmic. Residues 240 to 260 (FIFFFFLYYISSILMTFSYLM) form a helical membrane-spanning segment. At 261–266 (TKYKLA) the chain is on the extracellular side. A helical transmembrane segment spans residues 267–287 (VEFGEIAAILYPLGHSLILIV). Residues 288–309 (LNNKLRQTFVRMLTCRKIACMI) lie on the Cytoplasmic side of the membrane.

Belongs to the G-protein coupled receptor T2R family. In terms of tissue distribution, expressed in subsets of taste receptor cells of the tongue and palate epithelium and exclusively in gustducin-positive cells.

Its subcellular location is the membrane. Functionally, receptor that may play a role in the perception of bitterness and is gustducin-linked. May play a role in sensing the chemical composition of the gastrointestinal content. The activity of this receptor may stimulate alpha gustducin, mediate PLC-beta-2 activation and lead to the gating of TRPM5. In Homo sapiens (Human), this protein is Taste receptor type 2 member 8 (TAS2R8).